We begin with the raw amino-acid sequence, 460 residues long: ATP synthase subunit beta (460 aa).

Residue 150–157 (GGAGVGKT) participates in ATP binding.

This sequence belongs to the ATPase alpha/beta chains family. F-type ATPases have 2 components, CF(1) - the catalytic core - and CF(0) - the membrane proton channel. CF(1) has five subunits: alpha(3), beta(3), gamma(1), delta(1), epsilon(1). CF(0) has three main subunits: a(1), b(2) and c(9-12). The alpha and beta chains form an alternating ring which encloses part of the gamma chain. CF(1) is attached to CF(0) by a central stalk formed by the gamma and epsilon chains, while a peripheral stalk is formed by the delta and b chains.

The protein resides in the cell inner membrane. The enzyme catalyses ATP + H2O + 4 H(+)(in) = ADP + phosphate + 5 H(+)(out). In terms of biological role, produces ATP from ADP in the presence of a proton gradient across the membrane. The catalytic sites are hosted primarily by the beta subunits. In Sodalis glossinidius (strain morsitans), this protein is ATP synthase subunit beta.